A 100-amino-acid polypeptide reads, in one-letter code: UPF0251 protein VVA1436 (100 aa).

It belongs to the UPF0251 family.

The chain is UPF0251 protein VVA1436 from Vibrio vulnificus (strain YJ016).